A 367-amino-acid chain; its full sequence is Ferrochelatase (367 aa).

Residues histidine 213 and glutamate 294 each coordinate Fe cation.

Belongs to the ferrochelatase family.

Its subcellular location is the cytoplasm. It carries out the reaction heme b + 2 H(+) = protoporphyrin IX + Fe(2+). The protein operates within porphyrin-containing compound metabolism; protoheme biosynthesis; protoheme from protoporphyrin-IX: step 1/1. Catalyzes the ferrous insertion into protoporphyrin IX. This chain is Ferrochelatase, found in Polaromonas sp. (strain JS666 / ATCC BAA-500).